We begin with the raw amino-acid sequence, 409 residues long: NADH-quinone oxidoreductase subunit D (409 aa).

It belongs to the complex I 49 kDa subunit family. As to quaternary structure, NDH-1 is composed of 14 different subunits. Subunits NuoB, C, D, E, F, and G constitute the peripheral sector of the complex.

It localises to the cell inner membrane. The catalysed reaction is a quinone + NADH + 5 H(+)(in) = a quinol + NAD(+) + 4 H(+)(out). In terms of biological role, NDH-1 shuttles electrons from NADH, via FMN and iron-sulfur (Fe-S) centers, to quinones in the respiratory chain. The immediate electron acceptor for the enzyme in this species is believed to be ubiquinone. Couples the redox reaction to proton translocation (for every two electrons transferred, four hydrogen ions are translocated across the cytoplasmic membrane), and thus conserves the redox energy in a proton gradient. This Helicobacter pylori (strain HPAG1) protein is NADH-quinone oxidoreductase subunit D.